The chain runs to 358 residues: MNILNVIRPGVMNGDEARIVFELAKKKQFAIPAVNCIGTDSINAVLETAARVKSPIIIQFSHGGASFIAGYKKKLSENQEQAIQGAVSGAQHVHLMAKHYEIPVILHTDHCPKETLSWIDGLLEVGQNYYFNNNRPLFTSHMIDLSKESLEENISTCKKYFKRIKNINMMLEIELGCTGGEEDGIDNTKIDKKLLYTQPQDVNYAYEELNTISKNFSIAASFGNIHGVYQPGNIDLRPIILKNSQEFVSSKHNLEKNPLNLVFHGGSGSNLKEIKESIQYGVVKMNIDTDIQWAAWKGVLDFYKQNKEFLQHQLGNTTNKHKPNKKYYDPRTWIRKSQESISIRLEQSFKELNSFNIL.

D-glyceraldehyde 3-phosphate is bound at residue S61. Catalysis depends on D109, which acts as the Proton donor. Zn(2+)-binding residues include H110, D144, E174, and H226. Position 227 (G227) interacts with dihydroxyacetone phosphate. Position 264 (H264) interacts with Zn(2+). Dihydroxyacetone phosphate is bound by residues G265–S267 and N286–T289.

It belongs to the class II fructose-bisphosphate aldolase family. It depends on Zn(2+) as a cofactor.

It carries out the reaction beta-D-fructose 1,6-bisphosphate = D-glyceraldehyde 3-phosphate + dihydroxyacetone phosphate. It functions in the pathway carbohydrate degradation; glycolysis; D-glyceraldehyde 3-phosphate and glycerone phosphate from D-glucose: step 4/4. In terms of biological role, catalyzes the aldol condensation of dihydroxyacetone phosphate (DHAP or glycerone-phosphate) with glyceraldehyde 3-phosphate (G3P) to form fructose 1,6-bisphosphate (FBP) in gluconeogenesis and the reverse reaction in glycolysis. This chain is Fructose-bisphosphate aldolase class 2 (fbaA), found in Buchnera aphidicola subsp. Acyrthosiphon pisum (strain APS) (Acyrthosiphon pisum symbiotic bacterium).